A 371-amino-acid polypeptide reads, in one-letter code: Putative glutamate--cysteine ligase 2 (371 aa).

This sequence belongs to the glutamate--cysteine ligase type 2 family. YbdK subfamily. As to quaternary structure, homodimer.

The enzyme catalyses L-cysteine + L-glutamate + ATP = gamma-L-glutamyl-L-cysteine + ADP + phosphate + H(+). In terms of biological role, ATP-dependent carboxylate-amine ligase which exhibits weak glutamate--cysteine ligase activity. This Cronobacter sakazakii (strain ATCC BAA-894) (Enterobacter sakazakii) protein is Putative glutamate--cysteine ligase 2.